We begin with the raw amino-acid sequence, 137 residues long: Glutamate mutase sigma subunit (137 aa).

Positions 3 to 137 (EVNLVLGVIG…KALKEDLGLM (135 aa)) constitute a B12-binding domain. Residues 13–17 (ADVHA), H16, 61–63 (SSL), and 93–97 (NLVVG) each bind adenosylcob(III)alamin.

Belongs to the methylaspartate mutase GlmS subunit family. In terms of assembly, heterotetramer composed of 2 epsilon subunits (GlmE) and 2 sigma subunits (GlmS). GlmE exists as a homodimer and GlmS as a monomer. It depends on adenosylcob(III)alamin as a cofactor.

The enzyme catalyses (2S,3S)-3-methyl-L-aspartate = L-glutamate. The protein operates within amino-acid degradation; L-glutamate degradation via mesaconate pathway; acetate and pyruvate from L-glutamate: step 1/4. Its function is as follows. Catalyzes the carbon skeleton rearrangement of L-glutamate to L-threo-3-methylaspartate ((2S,3S)-3-methylaspartate). In Carboxydothermus hydrogenoformans (strain ATCC BAA-161 / DSM 6008 / Z-2901), this protein is Glutamate mutase sigma subunit.